Here is a 239-residue protein sequence, read N- to C-terminus: MLGSLSLLWLAAMTTSLVSQPQILTLEDYQEGEEDDVTVATPSLAVRCDYDRCRHLQVSCQELQKVGPVACLCPGLSREDQQPEPPRLGEVQIMAEEGYAVVHWCAPFSPVSHYWLLLWESNGAPQKSAPLNATVRRAELKGLKPGVAYVLCVVAANDAGESNVPGAEVEGPENWTGPSFGPCRKFIMPPKPVTLVYAAVGVGTALALLSCAALVWHFCLRERWGCPRRQGMAQASEAL.

An N-terminal signal peptide occupies residues 1–19 (MLGSLSLLWLAAMTTSLVS). Over 20-194 (QPQILTLEDY…KFIMPPKPVT (175 aa)) the chain is Extracellular. The 98-residue stretch at 82-179 (QPEPPRLGEV…EGPENWTGPS (98 aa)) folds into the Fibronectin type-III domain. Asparagine 132 and asparagine 174 each carry an N-linked (GlcNAc...) asparagine glycan. A helical transmembrane segment spans residues 195–215 (LVYAAVGVGTALALLSCAALV). Topologically, residues 216–239 (WHFCLRERWGCPRRQGMAQASEAL) are cytoplasmic.

The protein resides in the membrane. The protein is LRRN4 C-terminal-like protein (Lrrn4cl) of Mus musculus (Mouse).